A 202-amino-acid polypeptide reads, in one-letter code: Phospholipase A2 inhibitor gamma subunit A (202 aa).

Positions 1-19 (MKSLQIICLLFIFVARGSC) are cleaved as a signal peptide. 8 disulfide bridges follow: Cys22/Cys47, Cys25/Cys32, Cys40/Cys68, Cys74/Cys95, Cys96/Cys101, Cys119/Cys144, Cys137/Cys166, and Cys170/Cys192. Asn177 carries N-linked (GlcNAc...) asparagine glycosylation.

This sequence belongs to the CNF-like-inhibitor family. Heterodimer of subunit A and subunit B. In terms of processing, N-glycosylated. As to expression, expressed by the liver. Not expressed in esophagus, stomach, pancreas, spleen, gall bladder, small intestine, rectum, kidney, trachea, lung, testis and body fat.

The protein localises to the secreted. Its function is as follows. Inhibits the enzymatic activity of all phospholipase A2 (PA2) groups. The protein is Phospholipase A2 inhibitor gamma subunit A of Elaphe quadrivirgata (Japanese four-lined ratsnake).